Reading from the N-terminus, the 179-residue chain is UPF0227 protein VS_2073 (179 aa).

This sequence belongs to the UPF0227 family.

The polypeptide is UPF0227 protein VS_2073 (Vibrio atlanticus (strain LGP32) (Vibrio splendidus (strain Mel32))).